A 303-amino-acid polypeptide reads, in one-letter code: MKFGTVWKYYFTESLLKATIRTPSQLNLAPNALRPVLDQLCRLFPQNPTVQIRPIRLAGVRGEEIKAQASATQLIFHIHGGAFFLGSLNTHRALMTDLASRTQMQVIHVDYPLAPEHPYPEAIDAIFDVYQALLVQGIKPKDIIISGDSCGANLALALSLRLKQQPELMPSGLILMSPYLDLTLTSESLRFNQKHDALLSIEALQAGIKHYLTDDIQPGDPRVSPLFDDLDGLPPTLVQVGSKEILLDDSKRFREKAEQADVKVHFKLYTGMWNNFQMFNAWFPEAKQALADIAEFATSLDLD.

The short motif at 79–81 (HGG) is the Involved in the stabilization of the negatively charged intermediate by the formation of the oxyanion hole element. Catalysis depends on residues S149 and E244.

It belongs to the 'GDXG' lipolytic enzyme family.

It is found in the secreted. This Acinetobacter venetianus (strain ATCC 31012 / DSM 23050 / BCRC 14357 / CCUG 45561 / CIP 110063 / KCTC 2702 / LMG 19082 / RAG-1) protein is Esterase (est).